The primary structure comprises 272 residues: Auxin-responsive protein IAA5 (272 aa).

The segment at 1–92 is disordered; sequence MSPPLEPHDY…DSSPRHGASS (92 aa). Low complexity-rich tracts occupy residues 14 to 33 and 40 to 50; these read SAAA…SPNP and PRLTLRLGLPG. The short motif at 44–48 is the EAR-like (transcriptional repression) element; it reads LRLGL. A PB1 domain is found at 152-256; that stretch reads PLYVKVSMDG…RKLKIMRGSD (105 aa).

Belongs to the Aux/IAA family. In terms of assembly, homodimers and heterodimers. As to expression, highly expressed in roots and flowers. Expressed in shoots.

Its subcellular location is the nucleus. Aux/IAA proteins are short-lived transcriptional factors that function as repressors of early auxin response genes at low auxin concentrations. This is Auxin-responsive protein IAA5 (IAA5) from Oryza sativa subsp. indica (Rice).